A 236-amino-acid polypeptide reads, in one-letter code: Purine nucleoside phosphorylase DeoD-type (236 aa).

Residue His5 participates in a purine D-ribonucleoside binding. Phosphate contacts are provided by residues Gly21, Arg25, Arg44, and 88 to 91 (RVGT). Residues 180–182 (DME) and 204–205 (SD) contribute to the a purine D-ribonucleoside site. The active-site Proton donor is Asp205.

It belongs to the PNP/UDP phosphorylase family. In terms of assembly, homohexamer; trimer of homodimers.

It carries out the reaction a purine D-ribonucleoside + phosphate = a purine nucleobase + alpha-D-ribose 1-phosphate. The catalysed reaction is a purine 2'-deoxy-D-ribonucleoside + phosphate = a purine nucleobase + 2-deoxy-alpha-D-ribose 1-phosphate. Functionally, catalyzes the reversible phosphorolytic breakdown of the N-glycosidic bond in the beta-(deoxy)ribonucleoside molecules, with the formation of the corresponding free purine bases and pentose-1-phosphate. This Buchnera aphidicola subsp. Schizaphis graminum (strain Sg) protein is Purine nucleoside phosphorylase DeoD-type.